Reading from the N-terminus, the 378-residue chain is Erythronate-4-phosphate dehydrogenase (378 aa).

The substrate site is built by serine 45 and threonine 67. Aspartate 147 provides a ligand contact to NAD(+). Residue arginine 209 is part of the active site. Aspartate 233 provides a ligand contact to NAD(+). Residue glutamate 238 is part of the active site. The Proton donor role is filled by histidine 255. NAD(+) is bound at residue glycine 258. Tyrosine 259 contacts substrate.

Belongs to the D-isomer specific 2-hydroxyacid dehydrogenase family. PdxB subfamily. In terms of assembly, homodimer.

The protein localises to the cytoplasm. It catalyses the reaction 4-phospho-D-erythronate + NAD(+) = (R)-3-hydroxy-2-oxo-4-phosphooxybutanoate + NADH + H(+). It functions in the pathway cofactor biosynthesis; pyridoxine 5'-phosphate biosynthesis; pyridoxine 5'-phosphate from D-erythrose 4-phosphate: step 2/5. In terms of biological role, catalyzes the oxidation of erythronate-4-phosphate to 3-hydroxy-2-oxo-4-phosphonooxybutanoate. This Shewanella denitrificans (strain OS217 / ATCC BAA-1090 / DSM 15013) protein is Erythronate-4-phosphate dehydrogenase.